The following is a 207-amino-acid chain: MKWSNKDGYPWSKIIHAEKFFDKVIQNDTRPGKWEWADVVSGLRDLDKDPRMNSERRYVAIVNEDVGLGETKGIGITPGLFCGCQLIHPGEEVTSHRHNSVALYFIVEGTGELEVEGEVYSYKPFDIMTCPAWSYHAWRATGDKDTLMYVIHDMALLAYMRALFWEEPKGSENIRHMVKGSTHTWSNTKAPEVSKTQAAKELLKQGE.

The region spanning 85–151 is the Cupin type-2 domain; it reads QLIHPGEEVT…GDKDTLMYVI (67 aa).

The enzyme catalyses 5-nitrosalicylate + O2 = 2-oxo-3-(5-oxofuran-2-ylidene)propanoate + nitrite + H(+). Functionally, dioxygenase that catalyzes the cleavage of the aromatic ring of 5-nitrosalicylate (5NSA) without prior removal of the nitro group in biodegradation of 5-nitroanthranilate. This is 5-nitrosalicylic acid 1,2-dioxygenase (naaB) from Bradyrhizobium sp.